The chain runs to 122 residues: Large ribosomal subunit protein uL18 (122 aa).

This sequence belongs to the universal ribosomal protein uL18 family. In terms of assembly, part of the 50S ribosomal subunit; part of the 5S rRNA/L5/L18/L25 subcomplex. Contacts the 5S and 23S rRNAs.

Its function is as follows. This is one of the proteins that bind and probably mediate the attachment of the 5S RNA into the large ribosomal subunit, where it forms part of the central protuberance. This Desulfitobacterium hafniense (strain DSM 10664 / DCB-2) protein is Large ribosomal subunit protein uL18.